A 266-amino-acid polypeptide reads, in one-letter code: Non-structural maintenance of chromosomes element 1 homolog (266 aa).

The interval Met1–Ala102 is interaction with NSMCE3. The RING-type; atypical zinc finger occupies Cys191–Asn232. The segment at Glu246–His266 is disordered. The residue at position 251 (Ser251) is a Phosphoserine. Basic residues predominate over residues Ser256–His266.

It belongs to the NSE1 family. In terms of assembly, component of the SMC5-SMC6 complex which consists at least of SMC5, SMC6, NSMCE2, NSMCE1, NSMCE4A or EID3 and NSMCE3. NSMCE1, NSMCE4A or EID3 and NSMCE3 probably form a subcomplex that bridges the head domains of the SMC5-SMC6 heterodimer. Interacts with NSMCE3. Interacts with MAGEF1. In terms of processing, ubiquitinated.

Its subcellular location is the nucleus. It is found in the chromosome. The protein localises to the telomere. The catalysed reaction is S-ubiquitinyl-[E2 ubiquitin-conjugating enzyme]-L-cysteine + [acceptor protein]-L-lysine = [E2 ubiquitin-conjugating enzyme]-L-cysteine + N(6)-ubiquitinyl-[acceptor protein]-L-lysine.. Functionally, RING-type zinc finger-containing E3 ubiquitin ligase that assembles with melanoma antigen protein (MAGE) to catalyze the direct transfer of ubiquitin from E2 ubiquitin-conjugating enzyme to a specific substrate. Within MAGE-RING ubiquitin ligase complex, MAGE stimulates and specifies ubiquitin ligase activity likely through recruitment and/or stabilization of the E2 ubiquitin-conjugating enzyme at the E3:substrate complex. Involved in maintenance of genome integrity, DNA damage response and DNA repair. NSMCE3/MAGEG1 and NSMCE1 ubiquitin ligase are components of SMC5-SMC6 complex and may positively regulate homologous recombination-mediated DNA repair. MAGEF1-NSMCE1 ubiquitin ligase promotes proteasomal degradation of MMS19, a key component of the cytosolic iron-sulfur protein assembly (CIA) machinery. Down-regulation of MMS19 impairs the activity of several DNA repair and metabolism enzymes such as ERCC2/XPD, FANCJ, RTEL1 and POLD1 that require iron-sulfur clusters as cofactors. The polypeptide is Non-structural maintenance of chromosomes element 1 homolog (Homo sapiens (Human)).